Reading from the N-terminus, the 1015-residue chain is PHD finger protein 20-like protein 1 (1015 aa).

The Tudor 1 domain occupies 11–71 (ITFEIGARLE…SNRLRPLERP (61 aa)). Residues Lys75 and Lys79 each participate in a glycyl lysine isopeptide (Lys-Gly) (interchain with G-Cter in SUMO2) cross-link. The Tudor 2 domain occupies 85–141 (FDFKAGEEVLARWTDCRYYPAKIEAINKEGTFTVQFYDGVIRCLKRMHIKAMPEDAK). Disordered stretches follow at residues 183-206 (AKNK…RDGG) and 309-367 (EQAI…KAPK). Polar residues-rich tracts occupy residues 186–197 (KTGSKPRTSANS) and 315–346 (KPQS…SSGK). At Ser368 the chain carries Phosphoserine. Disordered regions lie at residues 389–455 (VINK…SSVP) and 478–513 (CGSE…NPTS). The span at 404–415 (PCKHSERRRRSQ) shows a compositional bias: basic residues. Ser432 is modified (phosphoserine). Polar residues-rich tracts occupy residues 443-453 (SISSQNQQESS) and 480-489 (SEVTGSQAPD). Residue Lys530 forms a Glycyl lysine isopeptide (Lys-Gly) (interchain with G-Cter in SUMO2) linkage. Basic and acidic residues predominate over residues 539–565 (EKTSTAFGKRKEKDKERKEKRDKDHYK). The segment at 539–585 (EKTSTAFGKRKEKDKERKEKRDKDHYKPKQKKKKKKKKKSKQHDYSD) is disordered. Over residues 566–579 (PKQKKKKKKKKKSK) the composition is skewed to basic residues. The PHD-type zinc finger occupies 681-729 (IVRCICELDEENGFMIQCEECLCWQHSVCMGLLEDSIPEQYICYICRDP). Lys849 is covalently cross-linked (Glycyl lysine isopeptide (Lys-Gly) (interchain with G-Cter in SUMO2)). A compositionally biased stretch (polar residues) spans 859–878 (HSYQKPQSFSQDCHSLTDPG). Positions 859-889 (HSYQKPQSFSQDCHSLTDPGSSDDDDVSSFE) are disordered. The segment covering 879 to 889 (SSDDDDVSSFE) has biased composition (acidic residues). Lys907 carries the post-translational modification N6-acetyllysine.

In terms of assembly, interacts with methylated DNMT1 (DNMT1K142me1). Interacts with SOX2.

It localises to the nucleus. Its function is as follows. Is a negative regulator of proteasomal degradation of a set of methylated proteins, including DNMT1 and SOX2. Involved in the maintainance of embryonic stem cells pluripotency, through the regulation of SOX2 levels. This Rattus norvegicus (Rat) protein is PHD finger protein 20-like protein 1 (Phf20l1).